An 88-amino-acid chain; its full sequence is MAHKKGASSSRNGRDSNAKRLGVKRFGGQYVKAGEILVRQRGTRFHPGDNVGRGGDDTLFALVAGRVEFGNLRGRKAVSVIPTPVASE.

The tract at residues 1-21 (MAHKKGASSSRNGRDSNAKRL) is disordered.

This sequence belongs to the bacterial ribosomal protein bL27 family.

This chain is Large ribosomal subunit protein bL27, found in Thermobifida fusca (strain YX).